The chain runs to 304 residues: GLLPKCKLVPEQISFILSTRENRNGVFLTLDSLKKGGILNKSDLSSTQVVFLIHGFISSANNSNYMDMTKALLEKNDCMVISIDWRNGACTNEFQILKFIGYPKAVENTRTVGKYIADFSKLLMQKYKVSLANIRLIGHSLGAQIAGFAGKEYQKFKLGKYPEIIGLDPAGPLFKSNDCSQRICETDAHYVQIIHTSNNLGTERTLGTVDFYMNNGYNQPGCYYSFIGETCSHTRAVQYFTECIRHECCLIGVPQSKNPQPVSKCTRNECVCVGLNAKRYPKTGSFYVPVESKAPYCNNKGKKI.

Residues cysteine 6 and cysteine 90 are joined by a disulfide bond. Asparagine 61 carries N-linked (GlcNAc...) asparagine glycosylation. The active-site Nucleophile is the serine 140. Aspartate 168 acts as the Charge relay system in catalysis. 2 cysteine pairs are disulfide-bonded: cysteine 179-cysteine 184 and cysteine 222-cysteine 231. Histidine 233 serves as the catalytic Charge relay system. Intrachain disulfides connect cysteine 248–cysteine 272, cysteine 249–cysteine 297, and cysteine 265–cysteine 270.

It belongs to the AB hydrolase superfamily. Lipase family. Expressed by the venom gland.

It localises to the secreted. It catalyses the reaction a 1,2-diacyl-sn-glycero-3-phosphocholine + H2O = a 2-acyl-sn-glycero-3-phosphocholine + a fatty acid + H(+). In terms of biological role, catalyzes the hydrolysis of phosphatidylcholine with phospholipase A1 activity. May act as an allergen and induce hemolytic activity. In Vespa velutina (Asian yellow-legged hornet), this protein is Phospholipase A1.